A 355-amino-acid chain; its full sequence is Protein RecA (355 aa).

Residue 72–79 (GPESSGKT) participates in ATP binding.

This sequence belongs to the RecA family.

The protein localises to the cytoplasm. Its function is as follows. Can catalyze the hydrolysis of ATP in the presence of single-stranded DNA, the ATP-dependent uptake of single-stranded DNA by duplex DNA, and the ATP-dependent hybridization of homologous single-stranded DNAs. It interacts with LexA causing its activation and leading to its autocatalytic cleavage. The sequence is that of Protein RecA from Thermosynechococcus vestitus (strain NIES-2133 / IAM M-273 / BP-1).